A 286-amino-acid polypeptide reads, in one-letter code: Rhomboid-type serine protease 2 (286 aa).

A run of 6 helical transmembrane segments spans residues isoleucine 18–isoleucine 38, serine 66–phenylalanine 86, valine 99–valine 119, leucine 122–phenylalanine 142, valine 164–isoleucine 183, and phenylalanine 188–tyrosine 210. The active-site Nucleophile is serine 133. The active site involves histidine 191.

It belongs to the peptidase S54 family.

It localises to the golgi apparatus membrane. The protein localises to the golgi apparatus. Its subcellular location is the cis-Golgi network membrane. The enzyme catalyses Cleaves type-1 transmembrane domains using a catalytic dyad composed of serine and histidine that are contributed by different transmembrane domains.. Functionally, probable rhomboid-type serine protease that catalyzes intramembrane proteolysis. The sequence is that of Rhomboid-type serine protease 2 (RBD2) from Debaryomyces hansenii (strain ATCC 36239 / CBS 767 / BCRC 21394 / JCM 1990 / NBRC 0083 / IGC 2968) (Yeast).